The sequence spans 308 residues: Rhamnose-binding lectin (308 aa).

The N-terminal stretch at 1–23 (MMLILKLSLLSLLIATPGLLVSG) is a signal peptide. SUEL-type lectin domains follow at residues 27 to 115 (ITCY…SFDC), 123 to 213 (ICEH…YICT), and 218 to 308 (VCEG…YACV). Asn110 carries N-linked (GlcNAc...) asparagine glycosylation.

As to quaternary structure, homotrimer. In terms of tissue distribution, expressed in eggs, but not in liver.

Its subcellular location is the secreted. Its function is as follows. Lectin that binds L-rhamnose. Also binds monosaccharides possessing steric similarity to the hydroxyl group orientation at C2 and C4 of the pyranose ring structure of L-rhamnose, such as L-mannose and L-lyxose. The chain is Rhamnose-binding lectin from Silurus asotus (Amur catfish).